The sequence spans 51 residues: Lantibiotic streptococcin A-FF22 (51 aa).

A propeptide spanning residues 1 to 25 (MEKNNEVINSIQEVSLEELDQIIGA) is cleaved from the precursor. 2 cross-links (beta-methyllanthionine (Thr-Cys)) span residues 33–38 (TISHEC) and 42–50 (TWAFLATCC). A cross-link (lanthionine (Ser-Cys)) is located at residues 35-49 (SHECHLNTWAFLATC). A 2,3-didehydrobutyrine modification is found at Thr-48.

The protein belongs to the type A lantibiotic family. Post-translationally, maturation of lantibiotics involves the enzymatic conversion of Thr, and Ser into dehydrated AA and the formation of thioether bonds with cysteine. This is followed by membrane translocation and cleavage of the modified precursor.

It is found in the secreted. Its subcellular location is the cell surface. Functionally, lanthionine-containing peptide antibiotic (lantibiotic) active on certain Gram-positive bacteria. The bactericidal activity of lantibiotics is based on depolarization of energized bacterial cytoplasmic membranes, initiated by the formation of aqueous transmembrane pores. This Streptococcus pyogenes protein is Lantibiotic streptococcin A-FF22 (scnA).